Consider the following 212-residue polypeptide: GTP-binding protein EngB (212 aa).

The EngB-type G domain occupies threonine 36–isoleucine 212. Residues glycine 44–serine 51, glycine 71–glutamate 75, aspartate 91–glycine 94, threonine 158–aspartate 161, and threonine 192–serine 194 contribute to the GTP site. Mg(2+)-binding residues include serine 51 and threonine 73.

This sequence belongs to the TRAFAC class TrmE-Era-EngA-EngB-Septin-like GTPase superfamily. EngB GTPase family. Requires Mg(2+) as cofactor.

In terms of biological role, necessary for normal cell division and for the maintenance of normal septation. In Zymomonas mobilis subsp. mobilis (strain ATCC 31821 / ZM4 / CP4), this protein is GTP-binding protein EngB.